Reading from the N-terminus, the 195-residue chain is COMM domain-containing protein 3 (195 aa).

The COMM domain maps to 124-193; the sequence is HITDVSWRLE…DASKSLERAT (70 aa).

The protein belongs to the COMM domain-containing protein 3 family. Component of the commander complex consisting of the CCC subcomplex and the retriever subcomplex. Component of the CCC (COMMD/CCDC22/CCDC93) subcomplex consisting of COMMD1, COMMD2, COMMD3, COMMD4, COMMD5, COMMD6, COMMD7, COMMD8, COMMD9, COMMD10, CCDC22 and CCDC93; within the complex forms a heterodimer with COMMD2. Interacts with NFKB1/p105. Interacts with CCDC22, CCDC93, SCNN1B, CUL3, CUL4A, CUL4B, CUL5. As to expression, widely expressed with highest expression in thymus.

The protein localises to the cytoplasm. The protein resides in the nucleus. Its function is as follows. Scaffold protein in the commander complex that is essential for endosomal recycling of transmembrane cargos; the commander complex is composed of the CCC subcomplex and the retriever subcomplex. May modulate activity of cullin-RING E3 ubiquitin ligase (CRL) complexes. May down-regulate activation of NF-kappa-B. Modulates Na(+) transport in epithelial cells by regulation of apical cell surface expression of amiloride-sensitive sodium channel (ENaC) subunits. The protein is COMM domain-containing protein 3 (COMMD3) of Homo sapiens (Human).